The chain runs to 368 residues: 1-deoxy-D-xylulose 5-phosphate reductoisomerase (368 aa).

NADPH is bound by residues Thr10, Gly11, Ser12, Ile13, Gln38, and Asn100. Lys101 contributes to the 1-deoxy-D-xylulose 5-phosphate binding site. Position 102 (Glu102) interacts with NADPH. Residue Asp125 coordinates Mn(2+). Positions 126, 127, 151, and 172 each coordinate 1-deoxy-D-xylulose 5-phosphate. A Mn(2+)-binding site is contributed by Glu127. Gly178 provides a ligand contact to NADPH. Ser185, Asn190, Lys191, and Glu194 together coordinate 1-deoxy-D-xylulose 5-phosphate. Glu194 serves as a coordination point for Mn(2+).

It belongs to the DXR family. The cofactor is Mg(2+). Requires Mn(2+) as cofactor.

It carries out the reaction 2-C-methyl-D-erythritol 4-phosphate + NADP(+) = 1-deoxy-D-xylulose 5-phosphate + NADPH + H(+). It participates in isoprenoid biosynthesis; isopentenyl diphosphate biosynthesis via DXP pathway; isopentenyl diphosphate from 1-deoxy-D-xylulose 5-phosphate: step 1/6. Its function is as follows. Catalyzes the NADPH-dependent rearrangement and reduction of 1-deoxy-D-xylulose-5-phosphate (DXP) to 2-C-methyl-D-erythritol 4-phosphate (MEP). This Tropheryma whipplei (strain TW08/27) (Whipple's bacillus) protein is 1-deoxy-D-xylulose 5-phosphate reductoisomerase.